Here is a 371-residue protein sequence, read N- to C-terminus: Putative glutamate--cysteine ligase 2 (371 aa).

It belongs to the glutamate--cysteine ligase type 2 family. YbdK subfamily.

The enzyme catalyses L-cysteine + L-glutamate + ATP = gamma-L-glutamyl-L-cysteine + ADP + phosphate + H(+). Its function is as follows. ATP-dependent carboxylate-amine ligase which exhibits weak glutamate--cysteine ligase activity. The polypeptide is Putative glutamate--cysteine ligase 2 (Paraburkholderia xenovorans (strain LB400)).